The primary structure comprises 116 residues: VTQADVGSALANLKIPGVGSLSQSTICRFESLTLSHNNMIALKPILQAWLEEAEGAQREKMNKPELFNGGEKKRKRTSIAAPEKRSLEAYFAVQPRPSSEKIAAIAEKLDLKKNVV.

Residues V1–E54 enclose the POU-specific domain. A disordered region spans residues A56–I79. Positions K72–V116 form a DNA-binding region, homeobox.

It belongs to the POU transcription factor family. Class-4 subfamily.

It localises to the nucleus. The protein resides in the cytoplasm. Functionally, multifunctional transcription factor with different regions mediating its different effects. Acts by binding (via its C-terminal domain) to sequences related to the consensus octamer motif 5'-ATGCAAAT-3' in the regulatory regions of its target genes. Regulates the expression of specific genes involved in differentiation and survival within a subset of neuronal lineages. It has been shown that activation of some of these genes requires its N-terminal domain, maybe through a neuronal-specific cofactor. The chain is POU domain, class 4, transcription factor 1 (POU4F1) from Gallus gallus (Chicken).